Reading from the N-terminus, the 178-residue chain is uncharacterized protein (178 aa).

Residues 1-13 (MEVASSSSACQFD) are compositionally biased toward polar residues. Disordered stretches follow at residues 1–24 (MEVA…ELKP) and 47–114 (WPSR…KKEK).

This is an uncharacterized protein from Caenorhabditis elegans.